A 637-amino-acid chain; its full sequence is Chaperone protein DnaK (637 aa).

A Phosphothreonine; by autocatalysis modification is found at Thr198. The disordered stretch occupies residues 597 to 637; sequence MYQQAAQESGQTEGAAQDPKGAAQDDDVVDADFEEVKDHKK. The span at 600–610 shows a compositional bias: polar residues; the sequence is QAAQESGQTEG. Residues 620–629 are compositionally biased toward acidic residues; sequence QDDDVVDADF.

Belongs to the heat shock protein 70 family.

Functionally, acts as a chaperone. This is Chaperone protein DnaK from Desulforapulum autotrophicum (strain ATCC 43914 / DSM 3382 / VKM B-1955 / HRM2) (Desulfobacterium autotrophicum).